Consider the following 506-residue polypeptide: Glycerol kinase (506 aa).

T14 is a binding site for ADP. 3 residues coordinate ATP: T14, T15, and S16. T14 is a sn-glycerol 3-phosphate binding site. An ADP-binding site is contributed by R18. Residues R84, E85, and Y136 each coordinate sn-glycerol 3-phosphate. Positions 84, 85, and 136 each coordinate glycerol. H232 is subject to Phosphohistidine; by HPr. Residue D246 coordinates sn-glycerol 3-phosphate. 2 residues coordinate glycerol: D246 and Q247. ADP-binding residues include T268 and G311. ATP is bound by residues T268, G311, Q315, and G412. ADP is bound by residues G412 and N416.

The protein belongs to the FGGY kinase family. As to quaternary structure, homotetramer and homodimer (in equilibrium). In terms of processing, the phosphoenolpyruvate-dependent sugar phosphotransferase system (PTS), including enzyme I, and histidine-containing protein (HPr) are required for the phosphorylation of His-232, which leads to the activation of the enzyme.

It carries out the reaction glycerol + ATP = sn-glycerol 3-phosphate + ADP + H(+). It functions in the pathway polyol metabolism; glycerol degradation via glycerol kinase pathway; sn-glycerol 3-phosphate from glycerol: step 1/1. With respect to regulation, activated by phosphorylation and inhibited by fructose 1,6-bisphosphate (FBP). Its function is as follows. Key enzyme in the regulation of glycerol uptake and metabolism. Catalyzes the phosphorylation of glycerol to yield sn-glycerol 3-phosphate. In Enterococcus casseliflavus (Enterococcus flavescens), this protein is Glycerol kinase.